Reading from the N-terminus, the 561-residue chain is Endoplasmic reticulum oxidoreductin-1 (561 aa).

The N-terminal stretch at 1-18 (MVKVLQLCFLSAISLVQA) is a signal peptide. 2 N-linked (GlcNAc...) asparagine glycosylation sites follow: asparagine 20 and asparagine 39. 5 cysteine pairs are disulfide-bonded: cysteine 95-cysteine 349, cysteine 105-cysteine 110, cysteine 145-cysteine 166, cysteine 152-cysteine 295, and cysteine 352-cysteine 355. Asparagine 135 carries an N-linked (GlcNAc...) asparagine glycan. Residues arginine 187, threonine 189, tryptophan 200, serine 228, histidine 231, and arginine 260 each contribute to the FAD site. A glycan (N-linked (GlcNAc...) asparagine) is linked at asparagine 342. Cysteine 352 serves as the catalytic Nucleophile. Cysteine 355 is a catalytic residue. N-linked (GlcNAc...) asparagine glycosylation occurs at asparagine 452.

Belongs to the EROs family. May function both as a monomer and a homodimer. Requires FAD as cofactor.

The protein localises to the endoplasmic reticulum membrane. Its function is as follows. Essential oxidoreductase that oxidizes proteins in the endoplasmic reticulum to produce disulfide bonds. Acts by oxidizing directly PDI1 isomerase through a direct disulfide exchange. Does not act as a direct oxidant of folding substrate, but relies on PDI1 to transfer oxidizing equivalent. Does not oxidize all pdi related proteins, suggesting that it can discriminate between PDI1 and related proteins. Its reoxidation probably involves electron transfer to molecular oxygen via FAD. Acts independently of glutathione. May be responsible for a significant proportion of reactive oxygen species (ROS) in the cell, thereby being a source of oxidative stress. The sequence is that of Endoplasmic reticulum oxidoreductin-1 (ERO1) from Kluyveromyces lactis (strain ATCC 8585 / CBS 2359 / DSM 70799 / NBRC 1267 / NRRL Y-1140 / WM37) (Yeast).